We begin with the raw amino-acid sequence, 508 residues long: MLO-like protein 3 (508 aa).

The Extracellular segment spans residues 1–21; the sequence is MTDKEESNHSSEVGAVRSLQE. Residues 22–42 form a helical membrane-spanning segment; the sequence is TPTWALATVCFFFIAVSICLE. At 43 to 68 the chain is on the cytoplasmic side; the sequence is RLINLLSTRLKKNRKTSLLEAVEKLK. The helical transmembrane segment at 69–89 threads the bilayer; sequence SVLMVLGFMSLMLNVTEGEVS. Residues 90–153 are Extracellular-facing; that stretch reads KICIPIKYAN…SEEGLTQLSY (64 aa). Residues 154 to 174 traverse the membrane as a helical segment; that stretch reads FFFVLACMHILCNLAILLLGM. The Cytoplasmic portion of the chain corresponds to 175-275; sequence AKMRKWNSWE…IQRSLHEDFK (101 aa). Residues 276-296 traverse the membrane as a helical segment; it reads TVVGISPLMWLTVVIFMLLDV. Over 297 to 304 the chain is Extracellular; the sequence is SGWRVYFY. The helical transmembrane segment at 305-325 threads the bilayer; it reads MSFVPLIIVLVIGTKLEMIVA. Residues 326 to 357 lie on the Cytoplasmic side of the membrane; it reads KMAVTIKENNSVIRGTPLVESNDTHFWFSNPR. The helical transmembrane segment at 358–378 threads the bilayer; that stretch reads FLLSILHYTLFLNTFEMAFIV. Over 379 to 401 the chain is Extracellular; the sequence is WITWQFGINSCYHDNQGIIITRL. The chain crosses the membrane as a helical span at residues 402-422; it reads VLAVTVQFLSSYITLPLYAIV. Residues 423-508 lie on the Cytoplasmic side of the membrane; it reads TQMGSSYKRA…EIQIQEKTER (86 aa). A calmodulin-binding region spans residues 436–457; sequence EQLANVLRHWQGMVRDKKKTIQ. The segment at 453-492 is disordered; it reads KKTIQTPDTDNNSNNNNGDIDSGESPVQTEVASEFRFSGR. S494 bears the Phosphoserine mark.

This sequence belongs to the MLO family.

It is found in the membrane. In terms of biological role, may be involved in modulation of pathogen defense and leaf cell death. Activity seems to be regulated by Ca(2+)-dependent calmodulin binding and seems not to require heterotrimeric G proteins. The sequence is that of MLO-like protein 3 (MLO3) from Arabidopsis thaliana (Mouse-ear cress).